The sequence spans 488 residues: Beta-xylosidase (488 aa).

Glu-163 serves as the catalytic Proton donor. The active-site Nucleophile is Glu-275.

It belongs to the glycosyl hydrolase 39 family.

It carries out the reaction Hydrolysis of (1-&gt;4)-beta-D-xylans, to remove successive D-xylose residues from the non-reducing termini.. Its function is as follows. Beta-xylosidase is an intracellular xylan-degrading enzyme. This Caldicellulosiruptor saccharolyticus (Caldocellum saccharolyticum) protein is Beta-xylosidase (xynB).